We begin with the raw amino-acid sequence, 361 residues long: Hydroxymethylglutaryl-CoA synthase (361 aa).

Glutamate 92 serves as the catalytic Proton donor/acceptor. The active-site Acyl-thioester intermediate is cysteine 124. (3S)-3-hydroxy-3-methylglutaryl-CoA contacts are provided by cysteine 124, serine 165, threonine 214, and histidine 247. Histidine 247 (proton donor/acceptor) is an active-site residue. Lysine 252 is a CoA binding site. Residues lysine 256, asparagine 279, and serine 309 each coordinate (3S)-3-hydroxy-3-methylglutaryl-CoA.

It belongs to the thiolase-like superfamily. Archaeal HMG-CoA synthase family. Interacts with acetoacetyl-CoA thiolase that catalyzes the precedent step in the pathway and with a DUF35 protein. The acetoacetyl-CoA thiolase/HMG-CoA synthase complex channels the intermediate via a fused CoA-binding site, which allows for efficient coupling of the endergonic thiolase reaction with the exergonic HMGCS reaction.

It carries out the reaction acetoacetyl-CoA + acetyl-CoA + H2O = (3S)-3-hydroxy-3-methylglutaryl-CoA + CoA + H(+). Its pathway is metabolic intermediate biosynthesis; (R)-mevalonate biosynthesis; (R)-mevalonate from acetyl-CoA: step 2/3. In terms of biological role, catalyzes the condensation of acetyl-CoA with acetoacetyl-CoA to form 3-hydroxy-3-methylglutaryl-CoA (HMG-CoA). Functions in the mevalonate (MVA) pathway leading to isopentenyl diphosphate (IPP), a key precursor for the biosynthesis of isoprenoid compounds that are building blocks of archaeal membrane lipids. The chain is Hydroxymethylglutaryl-CoA synthase from Aeropyrum pernix (strain ATCC 700893 / DSM 11879 / JCM 9820 / NBRC 100138 / K1).